The following is a 165-amino-acid chain: Neuritin-like protein (165 aa).

Residues 1–35 (MMRCCRRRCCCRQPPHALRPLLLLPLVLLPPLAAA) form the signal peptide. Ala-139 carries the GPI-anchor amidated alanine lipid modification. A propeptide spans 140 to 165 (PALPMAPAPPLLAAALALAYLLRPLA) (removed in mature form).

Belongs to the neuritin family.

It localises to the cell membrane. The polypeptide is Neuritin-like protein (NRN1L) (Homo sapiens (Human)).